Reading from the N-terminus, the 367-residue chain is tRNA-specific 2-thiouridylase MnmA (367 aa).

ATP-binding positions include 12–19 and methionine 38; that span reads GMSGGVDS. An interaction with target base in tRNA region spans residues 98–100; it reads NPD. The active-site Nucleophile is the cysteine 103. A disulfide bridge links cysteine 103 with cysteine 200. Position 128 (glycine 128) interacts with ATP. The tract at residues 150 to 152 is interaction with tRNA; that stretch reads KDQ. Cysteine 200 serves as the catalytic Cysteine persulfide intermediate. The interaction with tRNA stretch occupies residues 312–313; it reads RY.

The protein belongs to the MnmA/TRMU family. Interacts with TusE.

Its subcellular location is the cytoplasm. The catalysed reaction is S-sulfanyl-L-cysteinyl-[protein] + uridine(34) in tRNA + AH2 + ATP = 2-thiouridine(34) in tRNA + L-cysteinyl-[protein] + A + AMP + diphosphate + H(+). Functionally, catalyzes the 2-thiolation of uridine at the wobble position (U34) of tRNA(Lys), tRNA(Glu) and tRNA(Gln), leading to the formation of s(2)U34, the first step of tRNA-mnm(5)s(2)U34 synthesis. Sulfur is provided by IscS, via a sulfur-relay system. Binds ATP and its substrate tRNAs. The chain is tRNA-specific 2-thiouridylase MnmA from Proteus mirabilis (strain HI4320).